We begin with the raw amino-acid sequence, 98 residues long: NADH-ubiquinone oxidoreductase chain 4L (98 aa).

3 consecutive transmembrane segments (helical) span residues 1–21 (MSMVYINIFMAFTVSLMGLLV), 29–49 (SLLCLEGMMLSLFIMMTMAIL), and 61–81 (IILLVFAACEAALGLSLLVMV).

Belongs to the complex I subunit 4L family. Core subunit of respiratory chain NADH dehydrogenase (Complex I) which is composed of 45 different subunits.

Its subcellular location is the mitochondrion inner membrane. The enzyme catalyses a ubiquinone + NADH + 5 H(+)(in) = a ubiquinol + NAD(+) + 4 H(+)(out). Functionally, core subunit of the mitochondrial membrane respiratory chain NADH dehydrogenase (Complex I) which catalyzes electron transfer from NADH through the respiratory chain, using ubiquinone as an electron acceptor. Part of the enzyme membrane arm which is embedded in the lipid bilayer and involved in proton translocation. In Lynx canadensis (Canada lynx), this protein is NADH-ubiquinone oxidoreductase chain 4L (MT-ND4L).